The primary structure comprises 571 residues: Membrane protein insertase YidC (571 aa).

The chain crosses the membrane as a helical span at residues threonine 4–serine 24. The segment at alanine 29–serine 78 is disordered. Composition is skewed to low complexity over residues proline 34–alanine 43 and proline 55–serine 78. 4 consecutive transmembrane segments (helical) span residues leucine 369–tyrosine 389, glycine 440–valine 460, tyrosine 483–alanine 503, and proline 518–valine 538.

Belongs to the OXA1/ALB3/YidC family. Type 1 subfamily. As to quaternary structure, interacts with the Sec translocase complex via SecD. Specifically interacts with transmembrane segments of nascent integral membrane proteins during membrane integration.

Its subcellular location is the cell inner membrane. Functionally, required for the insertion and/or proper folding and/or complex formation of integral membrane proteins into the membrane. Involved in integration of membrane proteins that insert both dependently and independently of the Sec translocase complex, as well as at least some lipoproteins. Aids folding of multispanning membrane proteins. The protein is Membrane protein insertase YidC of Stenotrophomonas maltophilia (strain K279a).